The sequence spans 637 residues: Sodium-dependent proline transporter (637 aa).

The Cytoplasmic segment spans residues 1-45; sequence MKKLQEAHLRKPVTPDLLMTPSDQGDVDLDVDFAADRGNWTGKLD. Threonine 20 is modified (phosphothreonine). Residue serine 22 is modified to Phosphoserine. 3 consecutive transmembrane segments (helical) span residues 46 to 66, 74 to 93, and 117 to 137; these read FLLSCIGYCVGLGNVWRFPYR, AFLVPYFLMLAICGIPLFFL, and GAGAAMLLIVGLVAIYYNMII. Topologically, residues 138-214 are extracellular; it reads AYVLFYLFAS…QGIGRPGEIR (77 aa). Asparagine 182 carries an N-linked (GlcNAc...) asparagine glycan. 9 helical membrane passes run 215–233, 242–259, 295–312, 324–345, 378–397, 425–443, 459–479, 500–519, and 538–556; these read WNLCLCLLLAWVIVFLCIL, VVYFTATFPYLILLMLLV, IFYSLGVGFGGLLTFASY, FIVTLGNAITSILAGFAIFSVL, LPLSPFWSFLFFFMLLTLGL, VFSGLICVAMYLMGLILTT, SFGLMVVVITTCLAVTRVYGI, ACWLFLSPATLLALLVYSIV, and LGILMGLLSCLMIPAGMLV. Over 557–637 the chain is Cytoplasmic; the sequence is AVLREEGSLW…IAEEEEESMM (81 aa). Serine 573 and serine 582 each carry phosphoserine. At threonine 588 the chain carries Phosphothreonine. Tyrosine 591 is subject to Phosphotyrosine. 2 positions are modified to phosphoserine: serine 598 and serine 600.

Belongs to the sodium:neurotransmitter symporter (SNF) (TC 2.A.22) family. SLC6A7 subfamily. As to expression, expressed in subpopulations of putative glutamatergic pathways of rat brain.

The protein localises to the synaptic cell membrane. The enzyme catalyses L-proline(out) + chloride(out) + 2 Na(+)(out) = L-proline(in) + chloride(in) + 2 Na(+)(in). The catalysed reaction is L-pipecolate(out) + chloride(out) + 2 Na(+)(out) = L-pipecolate(in) + chloride(in) + 2 Na(+)(in). Functionally, brain specific sodium (and chloride)-dependent proline transporter. Terminates the action of proline by its high affinity sodium-dependent reuptake into presynaptic terminals. The chain is Sodium-dependent proline transporter (Slc6a7) from Rattus norvegicus (Rat).